The primary structure comprises 187 residues: MTLISHDERLIKALAVAIVDRPRATLKELAEAAGVSKATLHRFCGTRDNLVQMLEDHGETVLNQIIQACDLEHAEPLEALQRLIKEHLTHRELLVFLVFQYRPDFLDPHGEGARWQSYLEALDAFFLRGQQKGVFRIDITAAVFTELFITLVYGMVDAERRGRAASSNSAHTLEQMFLHGASNPARS.

A DNA-binding region (H-T-H motif) is located at residues 26–45 (LKELAEAAGVSKATLHRFCG).

In terms of biological role, confers resistance to guinolones. May negatively regulate the expression of genes that are associated with cell permeability to drugs. In Pseudomonas aeruginosa (strain ATCC 15692 / DSM 22644 / CIP 104116 / JCM 14847 / LMG 12228 / 1C / PRS 101 / PAO1), this protein is HTH-type transcriptional regulator NfxB (nfxB).